Here is a 575-residue protein sequence, read N- to C-terminus: 3-hydroxy-3-methylglutaryl-coenzyme A reductase 1 (575 aa).

Over residues 1–13 (MDTTGRLHHRKHA) the composition is skewed to basic residues. The segment at 1–25 (MDTTGRLHHRKHATPVEDRSPTTPK) is disordered. A run of 2 helical transmembrane segments spans residues 29 to 49 (ALPL…FSVA) and 73 to 93 (EIVA…FFGI). The tract at residues 97–160 (QSFIARASHD…PLIAPLVSEE (64 aa)) is linker. Residue N132 is glycosylated (N-linked (GlcNAc...) asparagine). Residues 161–575 (DEMIVNSVVD…SSKDMSKAAS (415 aa)) form a catalytic region. The Charge relay system role is filled by E254. The N-linked (GlcNAc...) asparagine glycan is linked to N318. Active-site charge relay system residues include K386 and D462. The helical transmembrane segment at 531–551 (LLAAIVAGSVLAGELSLMSAI) threads the bilayer. The active-site Proton donor is H560. The N-linked (GlcNAc...) asparagine glycan is linked to N564.

Belongs to the HMG-CoA reductase family.

Its subcellular location is the endoplasmic reticulum membrane. It localises to the mitochondrion membrane. The protein localises to the plastid membrane. It catalyses the reaction (R)-mevalonate + 2 NADP(+) + CoA = (3S)-3-hydroxy-3-methylglutaryl-CoA + 2 NADPH + 2 H(+). It functions in the pathway metabolic intermediate biosynthesis; (R)-mevalonate biosynthesis; (R)-mevalonate from acetyl-CoA: step 3/3. Catalyzes the synthesis of mevalonate. The specific precursor of all isoprenoid compounds present in plants. This chain is 3-hydroxy-3-methylglutaryl-coenzyme A reductase 1 (HMGR1), found in Hevea brasiliensis (Para rubber tree).